Here is a 495-residue protein sequence, read N- to C-terminus: Ribosome biogenesis protein YTM1 (495 aa).

A ubiquitin-like (UBL) domain region spans residues 15–97 (VKVIFTTTEP…ETTLTLQYVR (83 aa)). WD repeat units lie at residues 129 to 168 (WSSA…IATS), 175 to 213 (GHTA…HFTG), 223 to 262 (GHTG…APEP), 264 to 295 (ASLL…LWSI), 296 to 337 (HTAP…STLT), 386 to 426 (GHAN…PATK), and 458 to 495 (GDGC…TEQK).

Belongs to the WD repeat WDR12/YTM1 family. Component of the NOP7 complex, composed of ERB1, NOP7 and YTM1. The complex is held together by ERB1, which interacts with NOP7 via its N-terminal domain and with YTM1 via a high-affinity interaction between the seven-bladed beta-propeller domains of the 2 proteins. The NOP7 complex associates with the 66S pre-ribosome. Interacts (via UBL domain) with MDN1 (via VWFA/MIDAS domain).

It is found in the nucleus. Its subcellular location is the nucleolus. It localises to the nucleoplasm. Component of the NOP7 complex, which is required for maturation of the 25S and 5.8S ribosomal RNAs and formation of the 60S ribosome. The sequence is that of Ribosome biogenesis protein YTM1 from Chaetomium thermophilum (strain DSM 1495 / CBS 144.50 / IMI 039719) (Thermochaetoides thermophila).